Reading from the N-terminus, the 142-residue chain is Large ribosomal subunit protein uL11 (142 aa).

This sequence belongs to the universal ribosomal protein uL11 family. In terms of assembly, part of the ribosomal stalk of the 50S ribosomal subunit. Interacts with L10 and the large rRNA to form the base of the stalk. L10 forms an elongated spine to which L12 dimers bind in a sequential fashion forming a multimeric L10(L12)X complex. One or more lysine residues are methylated.

In terms of biological role, forms part of the ribosomal stalk which helps the ribosome interact with GTP-bound translation factors. The protein is Large ribosomal subunit protein uL11 of Mycoplasma mycoides subsp. mycoides SC (strain CCUG 32753 / NCTC 10114 / PG1).